The chain runs to 297 residues: 4-diphosphocytidyl-2-C-methyl-D-erythritol kinase (297 aa).

Lys-10 is a catalytic residue. 94–104 is an ATP binding site; sequence PVAAGLAGGSS. The active site involves Asp-136.

This sequence belongs to the GHMP kinase family. IspE subfamily.

The catalysed reaction is 4-CDP-2-C-methyl-D-erythritol + ATP = 4-CDP-2-C-methyl-D-erythritol 2-phosphate + ADP + H(+). It functions in the pathway isoprenoid biosynthesis; isopentenyl diphosphate biosynthesis via DXP pathway; isopentenyl diphosphate from 1-deoxy-D-xylulose 5-phosphate: step 3/6. Functionally, catalyzes the phosphorylation of the position 2 hydroxy group of 4-diphosphocytidyl-2C-methyl-D-erythritol. The chain is 4-diphosphocytidyl-2-C-methyl-D-erythritol kinase from Shouchella clausii (strain KSM-K16) (Alkalihalobacillus clausii).